Reading from the N-terminus, the 2909-residue chain is Micronemal protein 15 (2909 aa).

An N-terminal signal peptide occupies residues 1–29 (MVFRATREPFRLPLVAAFIALFLLKGVTC). N-linked (GlcNAc...) asparagine glycans are attached at residues Asn-512, Asn-563, Asn-792, Asn-813, Asn-986, Asn-1007, Asn-1057, Asn-1142, Asn-1319, Asn-1395, and Asn-1713. Positions 1755–1811 (TAIVGEWGEWSACTGTCFSQWWTPKRTRTRLVLAELSHSQIPSVSETATCLDLPPCG) constitute a TSP type-1 1 domain. Positions 1937 to 2073 (RRKGIMSRRR…RSQARNQTPD (137 aa)) are disordered. The span at 1967 to 1977 (SEQSGKASQNG) shows a compositional bias: polar residues. Asn-1976 carries an N-linked (GlcNAc...) asparagine glycan. Residues 1978–1988 (SRRHRASRKQK) show a composition bias toward basic residues. Residues 2004-2016 (GESTLHGTGTNAY) show a composition bias toward polar residues. A compositionally biased stretch (basic residues) spans 2049-2065 (KARRARRGAGRFRKSRS). A glycan (N-linked (GlcNAc...) asparagine) is linked at Asn-2333. Residues 2484 to 2549 (TCDYTEWSEW…EKCDWMPVCP (66 aa)) enclose the TSP type-1 2 domain. Cystine bridges form between Cys-2485–Cys-2528, Cys-2496–Cys-2500, and Cys-2542–Cys-2548. Positions 2552 to 2587 (EGEEEDDATGGVEPRGEPIVPPWSPERPTDENNQAM) are disordered. N-linked (GlcNAc...) asparagine glycosylation occurs at Asn-2706. A helical membrane pass occupies residues 2709–2729 (TWVICLLLGVGGGICFVLSCV). Residues Asn-2751, Asn-2768, and Asn-2793 are each glycosylated (N-linked (GlcNAc...) asparagine). The segment at 2759–2846 (ESHKLRRQGN…IGQTSPTQQR (88 aa)) is disordered. The span at 2801 to 2815 (PEEEPWQFEDRDEEP) shows a compositional bias: acidic residues. The span at 2837–2846 (IGQTSPTQQR) shows a compositional bias: polar residues.

In terms of assembly, component of a complex, at least composed of cysteine repeat modular protein A (CRMPa), cysteine repeat modular protein B (CRMPb), micronemal protein 15 (MIC15) and thrombospondin type 1 domain-containing protein (TSP1).

Its subcellular location is the membrane. Functionally, required for rhoptry secretion. Plays a role in host cell invasion. In Toxoplasma gondii, this protein is Micronemal protein 15.